We begin with the raw amino-acid sequence, 622 residues long: MFDFEYQLKVLPEKPGVYLMKNSSDEVIYVGKAKILKNRVKQYFQQSKNHSEKVRVMVSNIAEFEYIITDSEMEALILECNLIKKYRPKYNILLKDDKGYPYIKITINEDFPRVFISRTIAKDGSRYFGPYTDYSAVRETIELIKKIFPIRSCKRYIRDGQKPTRPCLNYHIKLCSAPCGAHISKQGYALIINDIVQLLSGKDKDILDKLKNQMEEASNSLQFEKAASLRDKIFAVKKITEKQKIIMGSFQNEDYINIAKDEKDSCVQVFFVREGKIIGREHFILEYTSDEREYKIIAEFIKDFYGGAAFVPKTVYVPDIEDKYLLEQWLTIRRGSKVEIKVPKRGEKIELLNLVKKNAKLTLEQFKIKYLQDKALYEVALAELSDILGFDDMPNRIEAYDISNIQGVDSVGSMVVFEKGRSKKSDYRRFKIKTVEGANDYHSMREILRRRFQRGIEEIQQIQKRNLEFSSGKFSVFPDLILIDGGKGHVNIALEVLKELNIEIPVAGMVKDDSHTTRGIIYNNIEKDISLDSNAMKLITRIQDEVHRFAISYHRTLRDKRVLKSILDDIPNIGTIRKKELLKKFGSIESIKKASIDQLLETPSIDKRSALSIKEFFAPNEL.

The GIY-YIG domain occupies Glu13–Ile92. In terms of domain architecture, UVR spans Lys204–Ile239.

This sequence belongs to the UvrC family. Interacts with UvrB in an incision complex.

It is found in the cytoplasm. The UvrABC repair system catalyzes the recognition and processing of DNA lesions. UvrC both incises the 5' and 3' sides of the lesion. The N-terminal half is responsible for the 3' incision and the C-terminal half is responsible for the 5' incision. The protein is UvrABC system protein C of Clostridium tetani (strain Massachusetts / E88).